Consider the following 182-residue polypeptide: Cytidylate kinase (182 aa).

7 to 15 (GLPGSGTTS) provides a ligand contact to ATP.

This sequence belongs to the cytidylate kinase family. Type 2 subfamily.

It is found in the cytoplasm. The enzyme catalyses CMP + ATP = CDP + ADP. It carries out the reaction dCMP + ATP = dCDP + ADP. The protein is Cytidylate kinase of Methanoregula boonei (strain DSM 21154 / JCM 14090 / 6A8).